A 180-amino-acid polypeptide reads, in one-letter code: Ribulose bisphosphate carboxylase small subunit, chloroplastic 1 (180 aa).

The N-terminal 56 residues, 1 to 56 (MASSVISSAAVATRTNVAQASMVAPFNGLKSAVSFPVSSKQNLDITSIASNGGRVQ), are a transit peptide targeting the chloroplast.

Belongs to the RuBisCO small chain family. Heterohexadecamer of 8 large and 8 small subunits.

It is found in the plastid. The protein resides in the chloroplast. Its function is as follows. RuBisCO catalyzes two reactions: the carboxylation of D-ribulose 1,5-bisphosphate, the primary event in carbon dioxide fixation, as well as the oxidative fragmentation of the pentose substrate. Both reactions occur simultaneously and in competition at the same active site. Although the small subunit is not catalytic it is essential for maximal activity. The sequence is that of Ribulose bisphosphate carboxylase small subunit, chloroplastic 1 from Petunia hybrida (Petunia).